The sequence spans 412 residues: NAD-dependent dihydropyrimidine dehydrogenase subunit PreT (412 aa).

Glutamate 286 serves as a coordination point for NAD(+).

This sequence belongs to the NADH dehydrogenase family. As to quaternary structure, heterotetramer of 2 PreA and 2 PreT subunits.

It catalyses the reaction 5,6-dihydrouracil + NAD(+) = uracil + NADH + H(+). The enzyme catalyses 5,6-dihydrothymine + NAD(+) = thymine + NADH + H(+). Involved in pyrimidine base degradation. Catalyzes physiologically the reduction of uracil to 5,6-dihydrouracil (DHU) by using NADH as a specific cosubstrate. It also catalyzes the reverse reaction and the reduction of thymine to 5,6-dihydrothymine (DHT). The polypeptide is NAD-dependent dihydropyrimidine dehydrogenase subunit PreT (preT) (Escherichia coli O157:H7).